The following is a 215-amino-acid chain: 3-isopropylmalate dehydratase small subunit (215 aa).

Belongs to the LeuD family. LeuD type 1 subfamily. Heterodimer of LeuC and LeuD.

The enzyme catalyses (2R,3S)-3-isopropylmalate = (2S)-2-isopropylmalate. Its pathway is amino-acid biosynthesis; L-leucine biosynthesis; L-leucine from 3-methyl-2-oxobutanoate: step 2/4. Functionally, catalyzes the isomerization between 2-isopropylmalate and 3-isopropylmalate, via the formation of 2-isopropylmaleate. In Polynucleobacter asymbioticus (strain DSM 18221 / CIP 109841 / QLW-P1DMWA-1) (Polynucleobacter necessarius subsp. asymbioticus), this protein is 3-isopropylmalate dehydratase small subunit.